Here is a 224-residue protein sequence, read N- to C-terminus: Lipoprotein-releasing system ATP-binding protein LolD (224 aa).

In terms of domain architecture, ABC transporter spans tyrosine 4–glutamate 224. Glycine 40–threonine 47 provides a ligand contact to ATP.

The protein belongs to the ABC transporter superfamily. Lipoprotein translocase (TC 3.A.1.125) family. In terms of assembly, the complex is composed of two ATP-binding proteins (LolD) and two transmembrane proteins (LolC and LolE).

It localises to the cell inner membrane. Functionally, part of the ABC transporter complex LolCDE involved in the translocation of mature outer membrane-directed lipoproteins, from the inner membrane to the periplasmic chaperone, LolA. Responsible for the formation of the LolA-lipoprotein complex in an ATP-dependent manner. The polypeptide is Lipoprotein-releasing system ATP-binding protein LolD (Desulfotalea psychrophila (strain LSv54 / DSM 12343)).